The chain runs to 127 residues: Classical arabinogalactan protein 10 (127 aa).

The first 21 residues, 1 to 21 (MASKSVVVLLFLALIASSAIA), serve as a signal peptide directing secretion. Gln22 carries the pyrrolidone carboxylic acid modification. Positions 22-107 (QAPGPAPTRS…TGSTPVDNNN (86 aa)) are disordered. 5 positions are modified to 4-hydroxyproline: Pro24, Pro26, Pro28, Pro32, and Pro36. Residues Pro24, Pro26, Pro28, Pro32, and Pro36 are each glycosylated (O-linked (Ara...) hydroxyproline). Pro residues-rich tracts occupy residues 25–39 (GPAPTRSPLPSPAQP), 48–58 (SITPTPTPTPS), and 66–86 (VSPPAGSPLPSSASPPAPPTS). The span at 98–107 (TGSTPVDNNN) shows a compositional bias: polar residues. Asn107 carries the GPI-anchor amidated asparagine lipid modification. A propeptide spans 108 to 127 (AATLAAGSLAGFVFVASLLL) (removed in mature form).

It belongs to the classical AGP family. Post-translationally, O-glycosylated on hydroxyprolines; noncontiguous hydroxylproline residues are glycosylated with arabinogalactan. As to expression, predominantly expressed in flowers and at a lower level in roots and siliques.

The protein resides in the cell membrane. Proteoglycan that seems to be implicated in diverse developmental roles such as differentiation, cell-cell recognition, embryogenesis and programmed cell death. The chain is Classical arabinogalactan protein 10 (AGP10) from Arabidopsis thaliana (Mouse-ear cress).